The following is a 128-amino-acid chain: Z-ring associated protein G (128 aa).

The helical transmembrane segment at 7–27 (EIWFSISIAFLIGTLCGVLVM) threads the bilayer. Residues 37–75 (QIQLKSELASAEAKIEEQKQQLERHFEQSANLLENLAED) are a coiled coil. A disordered region spans residues 105–128 (NHANGDEDNQPRDYSDGSSGLLKS). Residues 107–119 (ANGDEDNQPRDYS) are compositionally biased toward basic and acidic residues.

It belongs to the ZapG family. In terms of assembly, homotetramer. In solution, is primarily monomeric but forms small amounts of stable tetramer and hexadecamer. The crystal structure of the cytosolic region shows a coiled-coil tetramer in the asymmetric unit that is very likely to be a physiologically relevant assembly of the protein.

It localises to the cell inner membrane. Functionally, involved in cell division, cell envelope biogenesis and cell shape maintenance. The protein is Z-ring associated protein G of Haemophilus ducreyi (strain 35000HP / ATCC 700724).